We begin with the raw amino-acid sequence, 35 residues long: Photosystem II reaction center protein M (35 aa).

A helical membrane pass occupies residues 5 to 25; it reads ILAFVATALFILIPTAFLLIL.

The protein belongs to the PsbM family. In terms of assembly, PSII is composed of 1 copy each of membrane proteins PsbA, PsbB, PsbC, PsbD, PsbE, PsbF, PsbH, PsbI, PsbJ, PsbK, PsbL, PsbM, PsbT, PsbX, PsbY, PsbZ, Psb30/Ycf12, at least 3 peripheral proteins of the oxygen-evolving complex and a large number of cofactors. It forms dimeric complexes.

The protein resides in the plastid. It is found in the chloroplast thylakoid membrane. Functionally, one of the components of the core complex of photosystem II (PSII). PSII is a light-driven water:plastoquinone oxidoreductase that uses light energy to abstract electrons from H(2)O, generating O(2) and a proton gradient subsequently used for ATP formation. It consists of a core antenna complex that captures photons, and an electron transfer chain that converts photonic excitation into a charge separation. This subunit is found at the monomer-monomer interface. In Adiantum capillus-veneris (Maidenhair fern), this protein is Photosystem II reaction center protein M.